We begin with the raw amino-acid sequence, 79 residues long: MELEAMSRYTSPVNPAVFPHLTVVLLAIGMFFTAWFFVYEVTSTKYTRDICKELLISLVASLFMGFGVLFLLLWVGIYV.

Met1 carries the N-acetylmethionine modification. Over 1 to 16 (MELEAMSRYTSPVNPA) the chain is Lumenal. The chain crosses the membrane as a helical span at residues 17–37 (VFPHLTVVLLAIGMFFTAWFF). Over 38–54 (VYEVTSTKYTRDICKEL) the chain is Cytoplasmic. Residues 55-75 (LISLVASLFMGFGVLFLLLWV) form a helical membrane-spanning segment. The Lumenal portion of the chain corresponds to 76-79 (GIYV).

It belongs to the OST5 family. As to quaternary structure, component of the oligosaccharyltransferase (OST) complex. OST exists in two different complex forms which contain common core subunits RPN1, RPN2, OST48, OST4, DAD1 and TMEM258, either STT3A or STT3B as catalytic subunits, and form-specific accessory subunits. STT3A complex assembly occurs through the formation of 3 subcomplexes. Subcomplex 1 contains RPN1 and TMEM258, subcomplex 2 contains the STT3A-specific subunits STT3A, DC2/OSTC, and KCP2 as well as the core subunit OST4, and subcomplex 3 contains RPN2, DAD1, and OST48. The STT3A complex can form stable complexes with the Sec61 complex or with both the Sec61 and TRAP complexes.

The protein resides in the membrane. It is found in the endoplasmic reticulum. Its subcellular location is the cytoplasm. Its pathway is protein modification; protein glycosylation. In terms of biological role, subunit of the oligosaccharyl transferase (OST) complex that catalyzes the initial transfer of a defined glycan (Glc(3)Man(9)GlcNAc(2) in eukaryotes) from the lipid carrier dolichol-pyrophosphate to an asparagine residue within an Asn-X-Ser/Thr consensus motif in nascent polypeptide chains, the first step in protein N-glycosylation. N-glycosylation occurs cotranslationally and the complex associates with the Sec61 complex at the channel-forming translocon complex that mediates protein translocation across the endoplasmic reticulum (ER). All subunits are required for a maximal enzyme activity. The polypeptide is Dolichyl-diphosphooligosaccharide--protein glycosyltransferase subunit TMEM258 (Canis lupus familiaris (Dog)).